The primary structure comprises 351 residues: Outer membrane protein A (351 aa).

The first 21 residues, 1 to 21, serve as a signal peptide directing secretion; that stretch reads MKKTAIAITVALAGFATVAQA. Transmembrane regions (beta stranded) follow at residues 27–37, 55–66, 70–78, 96–107, 112–120, 147–156, 161–168, and 187–195; these read TWYTGAKLGWS, QLGAGAFGGYQV, VGFEMGYDW, QGVQLTAKLGYP, LDVYTRLGG, PVFAGGVEWA, IATRLEYQ, and LLSLGVSYR. 4 repeat units span residues 206-207, 208-209, 210-211, and 212-213. A 4 X 2 AA tandem repeats of A-P region spans residues 206–213; sequence APAPAPAP. The region spanning 215 to 343 is the OmpA-like domain; the sequence is VQTKHFTLKS…RVEIEVKGIK (129 aa). C316 and C328 form a disulfide bridge.

Belongs to the outer membrane OOP (TC 1.B.6) superfamily. OmpA family. In terms of assembly, monomer and homodimer.

It localises to the cell outer membrane. In terms of biological role, with TolR probably plays a role in maintaining the position of the peptidoglycan cell wall in the periplasm. Acts as a porin with low permeability that allows slow penetration of small solutes; an internal gate slows down solute passage. Functionally, required for conjugation with F-type plasmids; probably serves as the mating receptor on recipient cells. The chain is Outer membrane protein A from Shigella dysenteriae.